The primary structure comprises 383 residues: Na(+)/H(+) antiporter NhaA (383 aa).

11 consecutive transmembrane segments (helical) span residues 14-34, 47-67, 87-107, 117-137, 146-166, 171-191, 205-225, 252-272, 280-300, 321-341, and 356-376; these read AGGI…NSPL, FGMS…FLLI, IFPA…YVAF, GWAI…ALLG, VFLL…IALF, LSTM…MLNA, AILW…GVVI, VAFG…LEGV, MLPL…IFTF, IFAV…ISSL, and LGIL…LHFS.

Belongs to the NhaA Na(+)/H(+) (TC 2.A.33) antiporter family.

Its subcellular location is the cell inner membrane. It carries out the reaction Na(+)(in) + 2 H(+)(out) = Na(+)(out) + 2 H(+)(in). Functionally, na(+)/H(+) antiporter that extrudes sodium in exchange for external protons. This chain is Na(+)/H(+) antiporter NhaA, found in Vibrio alginolyticus.